We begin with the raw amino-acid sequence, 76 residues long: uncharacterized protein (76 aa).

2 consecutive transmembrane segments (helical) span residues 9–29 (AIGI…LQAV) and 45–65 (LLMI…FLDY).

Its subcellular location is the cell membrane. This is an uncharacterized protein from Bacillus subtilis (strain 168).